A 279-amino-acid chain; its full sequence is Zinc finger AN1 and C2H2 domain-containing stress-associated protein 11 (279 aa).

2 AN1-type zinc fingers span residues 7-55 (PDLG…REDV) and 95-145 (ATKK…KLPF). Residues Cys-13, Cys-18, Cys-28, Cys-31, Cys-36, His-39, His-45, Cys-47, Cys-101, Cys-106, Cys-118, Cys-121, Cys-126, His-129, His-135, and Cys-137 each contribute to the Zn(2+) site. A disordered region spans residues 152–178 (STTRKEAKTTRPNKAHPSTSSSSSSSR). Residues 169 to 178 (STSSSSSSSR) are compositionally biased toward low complexity. 2 consecutive C2H2-type zinc fingers follow at residues 213–236 (EVCP…EKTH) and 250–273 (DVCP…ERDH).

May be involved in environmental stress response. This chain is Zinc finger AN1 and C2H2 domain-containing stress-associated protein 11 (SAP11), found in Arabidopsis thaliana (Mouse-ear cress).